Consider the following 132-residue polypeptide: Fatty acid-binding protein 12 (132 aa).

Residues Arg107 and 127–129 (RTY) each bind a fatty acid.

Belongs to the calycin superfamily. Fatty-acid binding protein (FABP) family. In terms of tissue distribution, highly expressed in adult retina and testis with lower levels in cerebral cortex, kidney and epididymis. In the retina, strongly expressed in the ganglion cell layer and throughout the inner nuclear layer in amacrine and bipolar cells. Not expressed in the outer nuclear layer. In the testis, detected in the seminiferous tubules.

In terms of biological role, may play a role in lipid transport. This is Fatty acid-binding protein 12 from Rattus norvegicus (Rat).